Reading from the N-terminus, the 393-residue chain is Thermostable carboxypeptidase 1 (393 aa).

Residues His104, Asp109, and His245 each contribute to the Zn(2+) site. Catalysis depends on Tyr302, which acts as the Proton donor. Glu373 acts as the Nucleophile in catalysis.

Belongs to the peptidase M20 family. Homotetramer. Zn(2+) is required as a cofactor.

Its function is as follows. Can release basic, acidic, aromatic, and, to a lesser extent, aliphatic amino acids. In Saccharolobus solfataricus (strain ATCC 35092 / DSM 1617 / JCM 11322 / P2) (Sulfolobus solfataricus), this protein is Thermostable carboxypeptidase 1 (cpsA1).